The chain runs to 473 residues: ATP-dependent 6-phosphofructokinase 1 (473 aa).

S71 is subject to Phosphoserine. ATP-binding positions include G102, 165–166 (RG), and 190–193 (GDGS). Position 191 (D191) interacts with Mg(2+). Residues 219 to 221 (TID), 264 to 266 (MGR), E320, and 376 to 379 (YMIR) contribute to the substrate site. The Proton acceptor role is filled by D221.

The protein belongs to the phosphofructokinase type A (PFKA) family. PPi-dependent PFK group II subfamily. Atypical ATP-dependent clade 'X' sub-subfamily. Homotetramer. It depends on Mg(2+) as a cofactor. As to expression, expressed in roots, leaves, stems and flowers.

It is found in the cytoplasm. It carries out the reaction beta-D-fructose 6-phosphate + ATP = beta-D-fructose 1,6-bisphosphate + ADP + H(+). Its pathway is carbohydrate degradation; glycolysis; D-glyceraldehyde 3-phosphate and glycerone phosphate from D-glucose: step 3/4. Its activity is regulated as follows. Allosterically activated by AMP. Functionally, catalyzes the phosphorylation of D-fructose 6-phosphate to fructose 1,6-bisphosphate by ATP, the first committing step of glycolysis. This is ATP-dependent 6-phosphofructokinase 1 from Arabidopsis thaliana (Mouse-ear cress).